An 842-amino-acid polypeptide reads, in one-letter code: Glycogen phosphorylase, muscle form (842 aa).

Serine 2 is modified (N-acetylserine). Position 15 is a phosphoserine; by PHK; in form phosphorylase A (serine 15). The AMP site is built by aspartate 43 and tyrosine 76. 2 positions are modified to phosphotyrosine: tyrosine 204 and tyrosine 227. 310-319 (RRFKSSKFGC) provides a ligand contact to AMP. Serine 430 carries the post-translational modification Phosphoserine. At tyrosine 473 the chain carries Phosphotyrosine. Lysine 681 carries the N6-(pyridoxal phosphate)lysine modification. Residues serine 747 and serine 748 each carry the phosphoserine modification.

Belongs to the glycogen phosphorylase family. In terms of assembly, homodimer. Homotetramer; to form the enzymatically active phosphorylase A. The cofactor is pyridoxal 5'-phosphate. In terms of processing, phosphorylation of Ser-15 converts phosphorylase B (unphosphorylated) to phosphorylase A.

It catalyses the reaction [(1-&gt;4)-alpha-D-glucosyl](n) + phosphate = [(1-&gt;4)-alpha-D-glucosyl](n-1) + alpha-D-glucose 1-phosphate. Allosterically regulated through the non-covalent binding of metabolites, being activated by AMP and inhibited by ATP, ADP, and glucose-6-phosphate. The activity is also controlled by post-translational modifications including phosphorylation. Functionally, allosteric enzyme that catalyzes the rate-limiting step in glycogen catabolism, the phosphorolytic cleavage of glycogen to produce glucose-1-phosphate, and plays a central role in maintaining cellular and organismal glucose homeostasis. This is Glycogen phosphorylase, muscle form from Bos taurus (Bovine).